Consider the following 309-residue polypeptide: Tagatose-6-phosphate kinase (309 aa).

Belongs to the carbohydrate kinase PfkB family. LacC subfamily.

The catalysed reaction is D-tagatofuranose 6-phosphate + ATP = D-tagatofuranose 1,6-bisphosphate + ADP + H(+). The protein operates within carbohydrate metabolism; D-tagatose 6-phosphate degradation; D-glyceraldehyde 3-phosphate and glycerone phosphate from D-tagatose 6-phosphate: step 1/2. This chain is Tagatose-6-phosphate kinase, found in Streptococcus pneumoniae (strain ATCC 700669 / Spain 23F-1).